A 291-amino-acid polypeptide reads, in one-letter code: Bis(5'-nucleosyl)-tetraphosphatase, symmetrical (291 aa).

This sequence belongs to the Ap4A hydrolase family.

The enzyme catalyses P(1),P(4)-bis(5'-adenosyl) tetraphosphate + H2O = 2 ADP + 2 H(+). Hydrolyzes diadenosine 5',5'''-P1,P4-tetraphosphate to yield ADP. The sequence is that of Bis(5'-nucleosyl)-tetraphosphatase, symmetrical from Coxiella burnetii (strain Dugway 5J108-111).